The primary structure comprises 432 residues: Adenylosuccinate synthetase (432 aa).

GTP is bound by residues 13 to 19 and 41 to 43; these read GDEGKGK and GHT. Residue D14 is the Proton acceptor of the active site. D14 and G41 together coordinate Mg(2+). IMP is bound by residues 14–17, 39–42, T130, R144, Q225, T240, and R304; these read DEGK and NAGH. Residue H42 is the Proton donor of the active site. Substrate is bound at residue 300–306; sequence AVTGRPR. GTP is bound by residues R306, 332–334, and 415–417; these read KLD and STG.

It belongs to the adenylosuccinate synthetase family. Homodimer. Mg(2+) is required as a cofactor.

The protein resides in the cytoplasm. The enzyme catalyses IMP + L-aspartate + GTP = N(6)-(1,2-dicarboxyethyl)-AMP + GDP + phosphate + 2 H(+). It functions in the pathway purine metabolism; AMP biosynthesis via de novo pathway; AMP from IMP: step 1/2. In terms of biological role, plays an important role in the de novo pathway of purine nucleotide biosynthesis. Catalyzes the first committed step in the biosynthesis of AMP from IMP. This is Adenylosuccinate synthetase from Mannheimia succiniciproducens (strain KCTC 0769BP / MBEL55E).